Here is a 306-residue protein sequence, read N- to C-terminus: Elongation factor Ts (306 aa).

The tract at residues 80-83 (TDFV) is involved in Mg(2+) ion dislocation from EF-Tu.

The protein belongs to the EF-Ts family.

The protein localises to the cytoplasm. Associates with the EF-Tu.GDP complex and induces the exchange of GDP to GTP. It remains bound to the aminoacyl-tRNA.EF-Tu.GTP complex up to the GTP hydrolysis stage on the ribosome. This is Elongation factor Ts from Clostridium novyi (strain NT).